The following is a 262-amino-acid chain: Zinc finger protein ehn-3 (262 aa).

C2H2-type zinc fingers lie at residues 2–24 (EKCD…KVMH), 30–52 (FECQ…MMTH), 59–84 (FECP…DSEH), and 92–115 (AKCK…HTAH). The tract at residues 179-204 (SVKSAKELSPTPSTEIETPEEEELDG) is disordered. Positions 185 to 194 (ELSPTPSTEI) are enriched in low complexity. Acidic residues predominate over residues 195–204 (ETPEEEELDG). 2 consecutive C2H2-type zinc fingers follow at residues 208–230 (WYCD…SGLH) and 236–260 (FKCS…YANH).

This sequence belongs to the krueppel C2H2-type zinc-finger protein family.

It is found in the nucleus. Functionally, together with the zinc finger protein ztf-16, plays a role in gonadogenesis, specifically in somatic gonad precursor cell development. This is possibly by regulating tra-1 gene expression. In terms of biological role, required for proper gonadal primordium assembly and somatic gonad precursor cell morphology. This chain is Zinc finger protein ehn-3, found in Caenorhabditis elegans.